The following is a 473-amino-acid chain: Photosystem II CP43 reaction center protein (473 aa).

A propeptide spanning residues 1–14 is cleaved from the precursor; sequence MKTLYSLRRFYHVE. Position 15 is an N-acetylthreonine (Thr15). A Phosphothreonine modification is found at Thr15. The next 5 membrane-spanning stretches (helical) occupy residues 69–93, 134–155, 178–200, 255–275, and 291–312; these read LFEV…PHLA, LLGP…KDRN, KALY…RKIT, KPFA…LSYS, and WFNN…ASQA. Glu367 serves as a coordination point for [CaMn4O5] cluster. The helical transmembrane segment at 447–471 threads the bilayer; that stretch reads RARAAAAGFEKGIDRDFEPVLSMTP.

It belongs to the PsbB/PsbC family. PsbC subfamily. In terms of assembly, PSII is composed of 1 copy each of membrane proteins PsbA, PsbB, PsbC, PsbD, PsbE, PsbF, PsbH, PsbI, PsbJ, PsbK, PsbL, PsbM, PsbT, PsbX, PsbY, PsbZ, Psb30/Ycf12, at least 3 peripheral proteins of the oxygen-evolving complex and a large number of cofactors. It forms dimeric complexes. The cofactor is Binds multiple chlorophylls and provides some of the ligands for the Ca-4Mn-5O cluster of the oxygen-evolving complex. It may also provide a ligand for a Cl- that is required for oxygen evolution. PSII binds additional chlorophylls, carotenoids and specific lipids..

The protein resides in the plastid. It is found in the chloroplast thylakoid membrane. Its function is as follows. One of the components of the core complex of photosystem II (PSII). It binds chlorophyll and helps catalyze the primary light-induced photochemical processes of PSII. PSII is a light-driven water:plastoquinone oxidoreductase, using light energy to abstract electrons from H(2)O, generating O(2) and a proton gradient subsequently used for ATP formation. The chain is Photosystem II CP43 reaction center protein from Nicotiana tabacum (Common tobacco).